The primary structure comprises 214 residues: Neuromodulin (214 aa).

A disordered region spans residues 1 to 214 (MLCCMRRTKQ…EEAKPDQENA (214 aa)). S-palmitoyl cysteine attachment occurs at residues C3 and C4. Composition is skewed to basic and acidic residues over residues 9–33 (KQVE…DKAH), 52–88 (MKDD…KTEE), and 95–122 (LEVK…KDTP). One can recognise an IQ domain in the interval 32 to 61 (AHKAATKIQASFRGHIIRKKMKDDKKDDNS). The segment covering 124 to 133 (EENQASAESE) has biased composition (low complexity). Basic and acidic residues-rich tracts occupy residues 150–160 (QAKEESKKADV), 168–193 (ASEK…EIKA), and 205–214 (EEAKPDQENA).

Belongs to the neuromodulin family. In terms of assembly, binds calmodulin with a greater affinity in the absence of Ca(2+) than in its presence. In terms of processing, palmitoylated. Palmitoylation is essential for plasma membrane association.

It is found in the cell membrane. The protein localises to the cell projection. It localises to the growth cone membrane. Its subcellular location is the synapse. The protein resides in the filopodium membrane. Functionally, this protein is associated with nerve growth. It is a major component of the motile 'growth cones' that form the tips of elongating axons. Plays a role in axonal and dendritic filopodia induction. The sequence is that of Neuromodulin (gap43) from Xenopus laevis (African clawed frog).